Consider the following 305-residue polypeptide: Glycine--tRNA ligase alpha subunit (305 aa).

Belongs to the class-II aminoacyl-tRNA synthetase family. Tetramer of two alpha and two beta subunits.

It is found in the cytoplasm. It carries out the reaction tRNA(Gly) + glycine + ATP = glycyl-tRNA(Gly) + AMP + diphosphate. This is Glycine--tRNA ligase alpha subunit from Vibrio vulnificus (strain CMCP6).